Here is a 241-residue protein sequence, read N- to C-terminus: UPF0280 protein MK0206 (241 aa).

This sequence belongs to the UPF0280 family.

The polypeptide is UPF0280 protein MK0206 (Methanopyrus kandleri (strain AV19 / DSM 6324 / JCM 9639 / NBRC 100938)).